We begin with the raw amino-acid sequence, 129 residues long: Glycerol-3-phosphate cytidylyltransferase (129 aa).

CTP is bound by residues 9–10 (TF) and 14–17 (HYGH). Lysine 44 contacts substrate. Lysine 46 provides a ligand contact to CTP. Residue lysine 77 participates in substrate binding. 113 to 120 (RTDGISTT) lines the CTP pocket.

This sequence belongs to the cytidylyltransferase family. In terms of assembly, homodimer.

Its subcellular location is the cytoplasm. It carries out the reaction sn-glycerol 3-phosphate + CTP + H(+) = CDP-glycerol + diphosphate. It participates in cell wall biogenesis; poly(ribitol phosphate) teichoic acid biosynthesis. Catalyzes the transfer of the cytidylyl group of CTP to sn-glycerol 3-phosphate so the activated glycerol 3-phosphate can be used for teichoic acid synthesis, via incorporation into both the linkage unit by TarB and TarF. The chain is Glycerol-3-phosphate cytidylyltransferase (tarD) from Bacillus spizizenii (strain ATCC 23059 / NRRL B-14472 / W23) (Bacillus subtilis subsp. spizizenii).